A 218-amino-acid polypeptide reads, in one-letter code: 25.3 kDa vesicle transport protein SEC22-1 (218 aa).

Over 1 to 192 (MVKMTLIARV…DKAKDLNRQA (192 aa)) the chain is Cytoplasmic. In terms of domain architecture, Longin spans 6 to 120 (LIARVTDGLP…YAFIKFDTFI (115 aa)). A v-SNARE coiled-coil homology domain is found at 135-195 (NIAKLNDELY…KDLNRQALIR (61 aa)). The chain crosses the membrane as a helical; Anchor for type IV membrane protein span at residues 193 to 213 (LIRKWAPVAIVFGVVFLLFWV). The Vesicular segment spans residues 214-218 (KNKLW).

This sequence belongs to the synaptobrevin family. In terms of assembly, interacts with SEC24A. In terms of tissue distribution, mainly expressed in flowers and siliques, to a lower extent in seedlings, and barely in roots and leaves.

It is found in the golgi apparatus membrane. Its subcellular location is the endoplasmic reticulum membrane. V-SNARE involved in vesicle trafficking from the ER to the Golgi complex and required for early secretion. Involved in endoplasmic reticulum (ER) biogenesis and functions as well as for Golgi-stack integrity. Essential for gametophytes development. Involved in cesium Cs(+) accumulation, a non-essential cation. In Arabidopsis thaliana (Mouse-ear cress), this protein is 25.3 kDa vesicle transport protein SEC22-1.